The following is a 349-amino-acid chain: Replication-associated protein (349 aa).

Residues 9–118 (RLAARNIFLT…DGDYCESGQY (110 aa)) enclose the CRESS-DNA virus Rep endonuclease domain. An RCR-1 motif is present at residues 16-19 (FLTY). The a divalent metal cation site is built by E51, H59, and H61. Positions 59-61 (HLH) match the RCR-2 motif. The active-site For DNA cleavage activity is the Y105. The short motif at 105–108 (YITK) is the RCR-3 element. D109 serves as a coordination point for a divalent metal cation. The segment at 141-151 (VEEALAIIRAG) is binding to RBR1. The interval 154 to 174 (KTFIVSYHNVRANIERLFTKA) is oligomerization. ATP is bound at residue 220–227 (GDSRTGKT).

Belongs to the geminiviridae Rep protein family. Homooligomer. Interacts with the replication enhancer protein (REn). Interacts with host retinoblastoma-related protein 1 (RBR1), and may thereby induce the transcription of host replicative enzymes even if the cell is not dividing anymore. Interacts with host PCNA. Interacts with host SCE1 protein. Mg(2+) is required as a cofactor. Requires Mn(2+) as cofactor.

It is found in the host nucleus. Its function is as follows. Essential for the replication of viral ssDNA. The closed circular ssDNA genome is first converted to a superhelical dsDNA. Rep binds a specific region at the genome origin of replication. It introduces an endonucleolytic nick within the conserved sequence 5'-TAATATTAC-3' in the intergenic region of the genome present in all geminiviruses, thereby initiating the rolling circle replication (RCR). Following cleavage, binds covalently to the 5'-phosphate of DNA as a tyrosyl ester. The cleavage gives rise to a free 3'-OH that serves as a primer for the cellular DNA polymerase. The polymerase synthesizes the (+) strand DNA by rolling circle mechanism. After one round of replication, a Rep-catalyzed nucleotidyl transfer reaction releases a circular single-stranded virus genome, thereby terminating the replication. Displays origin-specific DNA cleavage, nucleotidyl transferase, ATPase and helicase activities. In Cabbage leaf curl virus (isolate Jamaica) (CaLCuV), this protein is Replication-associated protein.